Here is a 340-residue protein sequence, read N- to C-terminus: Phospho-N-acetylmuramoyl-pentapeptide-transferase (340 aa).

9 helical membrane passes run 24–44 (VPFGLSVLGSALLGSLLLPVL), 69–89 (TMGGLSFLPVGLLVAGIGSGW), 95–115 (AVALLTLAYTVVGWLDDWLVI), 129–149 (LLLQVGIGLVFCGYLAWQGIP), 156–176 (GIGALPLGWLFWPLALFVLVG), 196–216 (ALVLAGLGLTAADPVLALVAF), 235–255 (LFMGDTGSLGLGGALAGLALL), 260–280 (WALAWMGAVLVAEALSVILQV), and 316–336 (VVGCFYGLTALLVGLGWAWWH).

It belongs to the glycosyltransferase 4 family. MraY subfamily. It depends on Mg(2+) as a cofactor.

The protein resides in the cell inner membrane. The enzyme catalyses UDP-N-acetyl-alpha-D-muramoyl-L-alanyl-gamma-D-glutamyl-meso-2,6-diaminopimeloyl-D-alanyl-D-alanine + di-trans,octa-cis-undecaprenyl phosphate = di-trans,octa-cis-undecaprenyl diphospho-N-acetyl-alpha-D-muramoyl-L-alanyl-D-glutamyl-meso-2,6-diaminopimeloyl-D-alanyl-D-alanine + UMP. Its pathway is cell wall biogenesis; peptidoglycan biosynthesis. Catalyzes the initial step of the lipid cycle reactions in the biosynthesis of the cell wall peptidoglycan: transfers peptidoglycan precursor phospho-MurNAc-pentapeptide from UDP-MurNAc-pentapeptide onto the lipid carrier undecaprenyl phosphate, yielding undecaprenyl-pyrophosphoryl-MurNAc-pentapeptide, known as lipid I. In Synechococcus sp. (strain JA-3-3Ab) (Cyanobacteria bacterium Yellowstone A-Prime), this protein is Phospho-N-acetylmuramoyl-pentapeptide-transferase.